Reading from the N-terminus, the 459-residue chain is Serine protease HTRA3 (459 aa).

The signal sequence occupies residues 1 to 23; that stretch reads MQARALLPATLAILATLAVLALA. In terms of domain architecture, IGFBP N-terminal spans 27–90; sequence PAAPCPARCD…ECVRGVCRCR (64 aa). Disulfide bonds link cysteine 31/cysteine 54, cysteine 35/cysteine 56, cysteine 40/cysteine 57, cysteine 45/cysteine 60, cysteine 68/cysteine 82, cysteine 76/cysteine 87, cysteine 89/cysteine 107, and cysteine 96/cysteine 132. One can recognise a Kazal-like domain in the interval 76–134; sequence CGDSLECVRGVCRCRWTHTVCGTDGHTYADVCALQAASRRALQVSGTPVRQLQKGACPS. Positions 181–347 are serine protease; the sequence is GSGFIMSEAG…IPSDRITRFL (167 aa). Catalysis depends on charge relay system residues histidine 197, aspartate 233, and serine 311. One can recognise a PDZ domain in the interval 365–450; it reads IRMRTITPSL…EVRRGNDDLL (86 aa).

This sequence belongs to the peptidase S1C family. As to quaternary structure, homotrimer. Interacts with MYH9. Interacts with TGFB1; the interaction inhibits TGFB-mediated signaling. Interacts with BMP4; the interaction inhibits BMP4-mediated signaling. Interacts with TGFB2 and GDF5. In terms of tissue distribution, highest level of isoform 1 in maternal part of the placenta, moderate level in heart, testis and ovary, low level in muscle and lung. High expression found in granulosa cells of the ovary. Expressed in bone matrix, particularly in articular chondrocytes. Very low level of isoform 2 expressed in placenta. Expressed in the bone matrix, particularly in articular chondrocytes.

The protein resides in the secreted. In terms of biological role, serine protease that cleaves beta-casein/CSN2 as well as several extracellular matrix (ECM) proteoglycans such as decorin/DCN, biglycan/BGN and fibronectin/FN1. Inhibits signaling mediated by TGF-beta family proteins possibly indirectly by degradation of these ECM proteoglycans. May act as a tumor suppressor. Negatively regulates, in vitro, trophoblast invasion during placental development and may be involved in the development of the placenta in vivo. May also have a role in ovarian development, granulosa cell differentiation and luteinization. This Mus musculus (Mouse) protein is Serine protease HTRA3 (Htra3).